The following is a 255-amino-acid chain: 4-diphosphocytidyl-2-C-methyl-D-erythritol kinase (255 aa).

Lysine 9 is an active-site residue. ATP is bound at residue 95–105; it reads PSQAGLGGGSS. Aspartate 137 is a catalytic residue.

It belongs to the GHMP kinase family. IspE subfamily.

The enzyme catalyses 4-CDP-2-C-methyl-D-erythritol + ATP = 4-CDP-2-C-methyl-D-erythritol 2-phosphate + ADP + H(+). It functions in the pathway isoprenoid biosynthesis; isopentenyl diphosphate biosynthesis via DXP pathway; isopentenyl diphosphate from 1-deoxy-D-xylulose 5-phosphate: step 3/6. Catalyzes the phosphorylation of the position 2 hydroxy group of 4-diphosphocytidyl-2C-methyl-D-erythritol. In Sulfurovum sp. (strain NBC37-1), this protein is 4-diphosphocytidyl-2-C-methyl-D-erythritol kinase.